Consider the following 402-residue polypeptide: Multidrug resistance protein MdtH (402 aa).

Residues 1 to 12 (MSRVSQARNLGK) are Cytoplasmic-facing. Residues 13–33 (YFLLIDNMLVVLGFFVVFPLI) traverse the membrane as a helical segment. The Periplasmic segment spans residues 34-98 (SIRFVDQMGW…GFATMGIAHE (65 aa)). The helical transmembrane segment at 99–116 (PWLLWFSCFLSGLGGTLF) threads the bilayer. The Cytoplasmic segment spans residues 117 to 138 (DPPRSALVVKLIRPEQRGRFFS). The helical transmembrane segment at 139 to 159 (LLMMQDSAGAVIGALLGSWLL) threads the bilayer. Residues 160–164 (QYDFR) lie on the Periplasmic side of the membrane. The chain crosses the membrane as a helical span at residues 165-185 (LVCATGAILFILCALFNAWLL). The Cytoplasmic segment spans residues 186-213 (PAWKLSTVRTPVREGMRRVMSDKRFVTY). A helical transmembrane segment spans residues 214 to 234 (VLTLAGYYMLAVQVMLMLPIM). Residues 235–243 (VNDIAGSPA) lie on the Periplasmic side of the membrane. The helical transmembrane segment at 244 to 264 (AVKWMYAIEACLSLTLLYPIA) threads the bilayer. The Cytoplasmic segment spans residues 265 to 276 (RWSEKRFRLEHR). A helical membrane pass occupies residues 277 to 297 (LMAGLLVMSLSMIPIGMVGNL). Over 298–299 (QQ) the chain is Periplasmic. Residues 300–320 (LFTLICAFYIGSVIAEPARET) form a helical membrane-spanning segment. At 321–339 (LSASLADARARGSYMGFSR) the chain is on the cytoplasmic side. Residues 340–360 (LGLAIGGAIGYIGGGWLFDMG) traverse the membrane as a helical segment. Over 361 to 367 (KALAQPE) the chain is Periplasmic. A helical transmembrane segment spans residues 368–388 (LPWMMLGIIGFITFLALGWQF). The Cytoplasmic portion of the chain corresponds to 389–402 (SHKRTPRRMLEPGA).

It belongs to the major facilitator superfamily. DHA1 family. MdtH (TC 2.A.1.2.21) subfamily.

It localises to the cell inner membrane. This is Multidrug resistance protein MdtH from Salmonella schwarzengrund (strain CVM19633).